We begin with the raw amino-acid sequence, 60 residues long: UPF0434 protein Vapar_2640 (60 aa).

This sequence belongs to the UPF0434 family.

The protein is UPF0434 protein Vapar_2640 of Variovorax paradoxus (strain S110).